Reading from the N-terminus, the 364-residue chain is MTVTGIIAEFNPFHNGHKYLLEQASGLKIIAMSGNFVQRGEPAIVDKWTRAQMALEAGADLVLELPFLVSVQAADFFAKGAVDILERLGIDYLMFGTEEVLDYESISKVYGEKAEQMEAYLAGLPDSLSYPQKTQAMWQEFAGLNFSGSTPNHILGLAYAKAVAGRDIKLCSIQRQGAGYHSLSANQEFASATALRQNLDQPDFLKKFTPAHHLLETAPKVIWSDLFSYLRYQIVTCPDLTNFYQVNQELAVRIRVALKSSETIEELVEQVATKRYTKARVRRLLTYILVGARQEELPSGVHILGFSEQGRQHLSQLKGKVELVSRIGKDPWDSLTQQADKVYQLGNPALREQNFGRVPIMKGK.

ATP contacts are provided by residues isoleucine 7–leucine 20, glycine 96, asparagine 152, and arginine 175.

The protein belongs to the TmcAL family.

It localises to the cytoplasm. It carries out the reaction cytidine(34) in elongator tRNA(Met) + acetate + ATP = N(4)-acetylcytidine(34) in elongator tRNA(Met) + AMP + diphosphate. Functionally, catalyzes the formation of N(4)-acetylcytidine (ac(4)C) at the wobble position of elongator tRNA(Met), using acetate and ATP as substrates. First activates an acetate ion to form acetyladenylate (Ac-AMP) and then transfers the acetyl group to tRNA to form ac(4)C34. The protein is tRNA(Met) cytidine acetate ligase of Streptococcus sanguinis (strain SK36).